We begin with the raw amino-acid sequence, 86 residues long: DNA-directed RNA polymerase subunit omega (86 aa).

Belongs to the RNA polymerase subunit omega family. In terms of assembly, the RNAP catalytic core consists of 2 alpha, 1 beta, 1 beta' and 1 omega subunit. When a sigma factor is associated with the core the holoenzyme is formed, which can initiate transcription.

The catalysed reaction is RNA(n) + a ribonucleoside 5'-triphosphate = RNA(n+1) + diphosphate. Functionally, promotes RNA polymerase assembly. Latches the N- and C-terminal regions of the beta' subunit thereby facilitating its interaction with the beta and alpha subunits. The sequence is that of DNA-directed RNA polymerase subunit omega from Psychrobacter arcticus (strain DSM 17307 / VKM B-2377 / 273-4).